A 618-amino-acid chain; its full sequence is Auxin efflux carrier component 3a (618 aa).

Topologically, residues 1–6 are extracellular; the sequence is MISGHD. Residues 7-27 traverse the membrane as a helical segment; sequence FYTVMAAVVPLYVAMFLAYGS. Residues 28–38 are Cytoplasmic-facing; sequence VRWWGIFTPDQ. The chain crosses the membrane as a helical span at residues 39–59; it reads CSGINRFVAIFAVPLLSFHFI. Val51 is a (indol-3-yl)acetate binding site. Residues 60-70 are Extracellular-facing; it reads STNDPYAMNLR. A helical membrane pass occupies residues 71 to 90; the sequence is FLAADTLQKLLVLAGLAAWS. Residues 91 to 104 lie on the Cytoplasmic side of the membrane; that stretch reads RLPSRTGAPRLDWS. Residues 105–125 traverse the membrane as a helical segment; that stretch reads ITLFSLSTLPNTLVMGIPLLI. (indol-3-yl)acetate-binding residues include Asn115 and Leu117. Topologically, residues 126–134 are extracellular; sequence AMYGPYSGS. A helical membrane pass occupies residues 135-155; the sequence is LMVQIVVLQCIIWYTLMLFLF. (indol-3-yl)acetate is bound at residue Tyr148. The Cytoplasmic segment spans residues 156 to 478; that stretch reads EFRAARMLIA…LIRNPNTYSS (323 aa). Over residues 281-293 the composition is skewed to polar residues; sequence SLQSSRGPTPRQS. Residues 281 to 312 are disordered; sequence SLQSSRGPTPRQSNFDEHSARPPKPPATTTGA. The helical transmembrane segment at 479–499 threads the bilayer; that stretch reads LLGLAWSLVAFRWHVSMPAIV. Residues 500–502 lie on the Extracellular side of the membrane; sequence EKS. A helical transmembrane segment spans residues 503-523; it reads ISILSDAGLGMAMFSLGLFMA. Residues 524-539 are Cytoplasmic-facing; the sequence is LQPSIIACGKSAAVVS. Residues 540–560 form a helical membrane-spanning segment; that stretch reads MAVRFLAGPAVMAAASIAIGL. Residues 561–563 lie on the Extracellular side of the membrane; sequence RGT. The helical transmembrane segment at 564–584 threads the bilayer; sequence LLHVAIVQAALPQGIVPFVFA. Ile578 and Val579 together coordinate (indol-3-yl)acetate. The Cytoplasmic portion of the chain corresponds to 585–597; the sequence is KEYNVHPAILSTA. A helical membrane pass occupies residues 598–618; the sequence is VIFGMLIALPITLLYYILLGL.

It belongs to the auxin efflux carrier (TC 2.A.69.1) family. In terms of assembly, homodimer. In terms of tissue distribution, expressed in coleoptiles, roots, vascular bundles of leaves, shoots, lamina joints and vascular bundles of the lemma and filament. Expressed in stem bases, stems, leaves and young panicles.

Its subcellular location is the cell membrane. In terms of biological role, acts as a component of the auxin efflux carrier. Involved in the polar auxin transport which may regulate crown root development and response to water stress. This is Auxin efflux carrier component 3a from Oryza sativa subsp. japonica (Rice).